We begin with the raw amino-acid sequence, 397 residues long: Tryptophan synthase beta chain (397 aa).

Residue lysine 87 is modified to N6-(pyridoxal phosphate)lysine.

It belongs to the TrpB family. In terms of assembly, tetramer of two alpha and two beta chains. Requires pyridoxal 5'-phosphate as cofactor.

It carries out the reaction (1S,2R)-1-C-(indol-3-yl)glycerol 3-phosphate + L-serine = D-glyceraldehyde 3-phosphate + L-tryptophan + H2O. It functions in the pathway amino-acid biosynthesis; L-tryptophan biosynthesis; L-tryptophan from chorismate: step 5/5. Its function is as follows. The beta subunit is responsible for the synthesis of L-tryptophan from indole and L-serine. In Escherichia coli O157:H7, this protein is Tryptophan synthase beta chain.